The following is a 177-amino-acid chain: MNDLFLFNNSFQDSFEINTDLFDTNIINLSIVLFVVIRFLGEALSDTLENRKQTIIDSLQNSNKKVYIVKNKLVEVKSKLELTQTEVENVYSSRFSYFKTRKQTLLEQVQSYLTQLQSLQKDSIEGQTKKVLSDVYDTTISKTFDTLYINLASAFKKSGNFSNKKKAITYSYLKRLN.

Residues 26-44 form a helical membrane-spanning segment; sequence IINLSIVLFVVIRFLGEAL.

The protein belongs to the ATPase B chain family. F-type ATPases have 2 components, F(1) - the catalytic core - and F(0) - the membrane proton channel. F(1) has five subunits: alpha(3), beta(3), gamma(1), delta(1), epsilon(1). F(0) has four main subunits: a(1), b(1), b'(1) and c(10-14). The alpha and beta chains form an alternating ring which encloses part of the gamma chain. F(1) is attached to F(0) by a central stalk formed by the gamma and epsilon chains, while a peripheral stalk is formed by the delta, b and b' chains.

It is found in the plastid. The protein localises to the chloroplast thylakoid membrane. F(1)F(0) ATP synthase produces ATP from ADP in the presence of a proton or sodium gradient. F-type ATPases consist of two structural domains, F(1) containing the extramembraneous catalytic core and F(0) containing the membrane proton channel, linked together by a central stalk and a peripheral stalk. During catalysis, ATP synthesis in the catalytic domain of F(1) is coupled via a rotary mechanism of the central stalk subunits to proton translocation. Functionally, component of the F(0) channel, it forms part of the peripheral stalk, linking F(1) to F(0). This Bigelowiella natans (Pedinomonas minutissima) protein is ATP synthase subunit b, chloroplastic.